The primary structure comprises 1714 residues: Latrophilin Cirl (1714 aa).

The Extracellular segment spans residues 1-765; that stretch reads MSSIDISGRY…LFTMFDGNMR (765 aa). In terms of domain architecture, SUEL-type lectin spans 26–115; the sequence is ACEGKKLTIE…KYLEAHYQCI (90 aa). N-linked (GlcNAc...) asparagine glycosylation is present at N143. The segment at 183-302 is disordered; sequence PPHTVTHSTP…GSPASGNNSV (120 aa). A compositionally biased stretch (low complexity) spans 186–198; it reads TVTHSTPSSSTVP. A compositionally biased stretch (polar residues) spans 244–262; the sequence is PSSKLPSAGNATAPSNTRI. A glycan (N-linked (GlcNAc...) asparagine) is linked at N253. Low complexity-rich tracts occupy residues 272 to 282 and 290 to 301; these read DDGTLLTTKSS and ASNGSPASGNNS. N-linked (GlcNAc...) asparagine glycosylation is found at N299, N338, N395, N652, N701, and N728. The disordered stretch occupies residues 373–397; that stretch reads YDEYDDDPSSTTPAPSGGDCLHNSS. Residues 558 to 752 enclose the GAIN-B domain; sequence RSVVQKVKNI…AILMDVVDEH (195 aa). 2 cysteine pairs are disulfide-bonded: C707–C734 and C722–C736. A GPS region spans residues 707-752; sequence CVFWNYIDHAWSANGCSLESTNRTHSVCSCNHLTNFAILMDVVDEH. A helical membrane pass occupies residues 766–786; that stretch reads VFIYISIAICVVFIVIALLTL. At 787–799 the chain is on the cytoplasmic side; that stretch reads KLFNGVFVKSART. Residues 800–820 form a helical membrane-spanning segment; sequence TIYTSIYVCLLAIELLFLLGI. Topologically, residues 821 to 826 are extracellular; sequence EQTETS. Residues 827 to 847 traverse the membrane as a helical segment; the sequence is IFCGFITVFLHCAILSGAAWF. Residues 848 to 873 are Cytoplasmic-facing; the sequence is CYEAFHSYYTLTSDELLVEVDQTPKV. Residues 874 to 894 form a helical membrane-spanning segment; the sequence is NWYYLLSYGLSVSVVAISVAI. At 895–911 the chain is on the extracellular side; that stretch reads NPSTYTQNDYCVLMEAN. A helical transmembrane segment spans residues 912 to 932; the sequence is ILFYATFVAPVLIFFVAAIGY. Topologically, residues 933 to 966 are cytoplasmic; it reads TFLSWIIMCRKSCTGLKTKEHTRLASVRFDIRCS. The helical transmembrane segment at 967–987 threads the bilayer; sequence FVFLLLLSAVWCSAYFYLRGA. The Extracellular segment spans residues 988 to 994; the sequence is KTDEDTT. The helical transmembrane segment at 995–1015 threads the bilayer; it reads TIYGYCFICFNTLLGLYIFVF. At 1016 to 1714 the chain is on the cytoplasmic side; the sequence is HCIQNEKIRR…VRCYLEPLAK (699 aa). S1155, S1245, and S1252 each carry phosphoserine. Disordered stretches follow at residues 1229-1253, 1268-1287, 1293-1354, 1447-1536, and 1551-1694; these read PNSQ…LHSR, KTKQ…LDPP, AFYQ…PPPH, GGGS…DERM, and FQRQ…QQRH. Over residues 1296-1315 the composition is skewed to low complexity; the sequence is QQQQQMRRQQQQQQQQQQQQ. Phosphoserine is present on residues S1317 and S1318. 2 stretches are compositionally biased toward low complexity: residues 1330–1348 and 1453–1478; these read LHLQ…QQQL and GGSV…QQQR. 2 stretches are compositionally biased toward acidic residues: residues 1486 to 1500 and 1510 to 1523; these read DDDD…DEAT and CDDD…DLDD. A compositionally biased stretch (basic and acidic residues) spans 1524-1536; the sequence is DAHKLPPQSDERM. Positions 1565–1580 are enriched in low complexity; the sequence is GALPPGVAPGAGSAGP. Residues 1644-1659 are compositionally biased toward polar residues; the sequence is QTPAQKRQQLQKLSPQ. A compositionally biased stretch (low complexity) spans 1660–1675; that stretch reads STTSSSSHTSHSNLQP. Residues 1679–1693 are compositionally biased toward basic residues; the sequence is PLTHQHPHPPQHQQR.

This sequence belongs to the G-protein coupled receptor 2 family. LN-TM7 subfamily. In terms of assembly, forms a heterodimer, consisting of a large extracellular region non-covalently linked to a seven-transmembrane moiety. Post-translationally, proteolytically cleaved into 2 subunits, an extracellular subunit and a seven-transmembrane subunit.

It localises to the cell membrane. The polypeptide is Latrophilin Cirl (Drosophila ananassae (Fruit fly)).